A 185-amino-acid polypeptide reads, in one-letter code: Transcription termination/antitermination protein NusG (185 aa).

The region spanning 134-162 is the KOW domain; that stretch reads PGQMVRVIDGPFNDFDGLVEEVNYEKNRL.

The protein belongs to the NusG family.

In terms of biological role, participates in transcription elongation, termination and antitermination. The chain is Transcription termination/antitermination protein NusG from Xylella fastidiosa (strain 9a5c).